The sequence spans 169 residues: Protein ORFb in retron Ec67 (169 aa).

The sequence is that of Protein ORFb in retron Ec67 from Escherichia coli.